Here is a 132-residue protein sequence, read N- to C-terminus: RuBisCO chaperone RbcX (132 aa).

The tract at residues 110 to 132 is disordered; the sequence is HLSLSNPSPESEQQTISDTDWDH. Over residues 111–132 the composition is skewed to polar residues; it reads LSLSNPSPESEQQTISDTDWDH.

Belongs to the RbcX family. In terms of assembly, homodimer. Interacts with the exposed C-terminal peptide of RbcL via its central cleft, contacts a second RbcL monomer via its peripheral polar surface. RbcX and Raf1 can bind simultaneously to RbcL.

Its subcellular location is the carboxysome. It localises to the cytoplasm. Functionally, an RbcL-specific chaperone. The central cleft of the RbcX homodimer (RbcX2) binds the C-terminus of an RbcL monomer, stabilizing the C-terminus and probably preventing its reassociation with chaperonin GroEL-ES. At the same time the peripheral region of RbcX2 binds a second RbcL monomer, bridging the RbcL homodimers in the correct orientation. The RbcX2(2)-bound RbcL dimers then assemble into the RbcL8 core (RbcL8-(RbcX2)8). RbcS binding triggers the release of RbcX2. Its function is as follows. When rbcL-rbcX-rbcS or rbcL-rbcS were overexpressed in E.coli no change in reconstituted RuBisCO activity was observed, which suggests RbcX plays no role in RuBisCO assembly in this system. However in PubMed:8472962 E.coli chaperones groL and groS were also overexpressed, which may compensate for lack of rbcX. This Nostoc sp. (strain PCC 7120 / SAG 25.82 / UTEX 2576) protein is RuBisCO chaperone RbcX.